Consider the following 450-residue polypeptide: Glucose-6-phosphate isomerase (450 aa).

Position 38 is a phosphothreonine (Thr38). The active-site Proton donor is the Glu290. Residues His311 and Lys425 contribute to the active site.

It belongs to the GPI family.

The protein resides in the cytoplasm. It catalyses the reaction alpha-D-glucose 6-phosphate = beta-D-fructose 6-phosphate. The protein operates within carbohydrate biosynthesis; gluconeogenesis. It functions in the pathway carbohydrate degradation; glycolysis; D-glyceraldehyde 3-phosphate and glycerone phosphate from D-glucose: step 2/4. Catalyzes the reversible isomerization of glucose-6-phosphate to fructose-6-phosphate. This is Glucose-6-phosphate isomerase from Bacillus subtilis (strain 168).